The sequence spans 346 residues: L-glyceraldehyde 3-phosphate reductase (346 aa).

The NADP(+) site is built by tryptophan 33, aspartate 61, tyrosine 66, serine 168, glutamine 193, threonine 223, leucine 225, glutamine 227, lysine 233, serine 303, glutamine 307, and asparagine 311.

This sequence belongs to the shaker potassium channel beta subunit family.

The enzyme catalyses a primary alcohol + NADP(+) = an aldehyde + NADPH + H(+). In terms of biological role, aldo-keto reductase that catalyzes the stereospecific, NADPH-dependent reduction of L-glyceraldehyde 3-phosphate (L-GAP) to L-glycerol 3-phosphate (L-G3P). This Escherichia coli O157:H7 protein is L-glyceraldehyde 3-phosphate reductase.